A 459-amino-acid chain; its full sequence is Cysteine--tRNA ligase (459 aa).

Residue Cys-29 participates in Zn(2+) binding. The short motif at Pro-31–Asn-41 is the 'HIGH' region element. Residues Cys-209, His-234, and Glu-238 each coordinate Zn(2+). The short motif at Lys-267–Ser-271 is the 'KMSKS' region element. Lys-270 is an ATP binding site.

This sequence belongs to the class-I aminoacyl-tRNA synthetase family. In terms of assembly, monomer. Requires Zn(2+) as cofactor.

The protein resides in the cytoplasm. It carries out the reaction tRNA(Cys) + L-cysteine + ATP = L-cysteinyl-tRNA(Cys) + AMP + diphosphate. The sequence is that of Cysteine--tRNA ligase from Saccharophagus degradans (strain 2-40 / ATCC 43961 / DSM 17024).